The following is a 141-amino-acid chain: Protein NrdI (141 aa).

Belongs to the NrdI family.

Probably involved in ribonucleotide reductase function. The sequence is that of Protein NrdI from Wigglesworthia glossinidia brevipalpis.